A 638-amino-acid chain; its full sequence is 3D-(3,5/4)-trihydroxycyclohexane-1,2-dione hydrolase (638 aa).

Glu67 is a binding site for thiamine diphosphate. Positions 442-523 are thiamine pyrophosphate binding; it reads SLPGDLQRLW…INIMLFDNSG (82 aa). Residues Asp494 and Asn521 each contribute to the Mg(2+) site.

The protein belongs to the TPP enzyme family. It depends on Mg(2+) as a cofactor. Thiamine diphosphate serves as cofactor.

The catalysed reaction is 3D-3,5/4-trihydroxycyclohexane-1,2-dione + H2O = 5-deoxy-D-glucuronate + H(+). Its pathway is polyol metabolism; myo-inositol degradation into acetyl-CoA; acetyl-CoA from myo-inositol: step 3/7. Involved in the cleavage of the C1-C2 bond of 3D-(3,5/4)-trihydroxycyclohexane-1,2-dione (THcHDO) to yield 5-deoxy-glucuronate (5DG). This chain is 3D-(3,5/4)-trihydroxycyclohexane-1,2-dione hydrolase, found in Listeria monocytogenes serovar 1/2a (strain ATCC BAA-679 / EGD-e).